Here is a 383-residue protein sequence, read N- to C-terminus: MNLIPEILDLQGEFEKIRHQIHENPELGFDELCTAKLVAQKLKEFGYEVYEEIGKTGVVGVLKKGNSDKKIGLRADMDALPLQECTNLPYKSKKENVMHACGHDGHTTSLLLAAKYLASQNFNGALNLYFQPAEEGLGGAKAMIEDGLFEKFDSDYVFGWHNMPFGSDKKFYLKKGAMMASSDSYSIEVIGRGGHGSAPEKAKDPIYAASLLIVALQSIVSRNVDPQNSAVVSIGAFNAGHAFNIIPDIATIKMSVRALDNETRKLTEEKIYKICKGIAQANDIEIKINKNVVAPVTMNNDEAVDFASEVAKELFGEKNCEFNHRPLMASEDFGFFCEMKKCAYAFLENENDIYLHNSSYVFNDKLLARAASYYAKLALKYLK.

The protein belongs to the peptidase M20 family.

The enzyme catalyses N-benzoylglycine + H2O = benzoate + glycine. Cleaves hippuric acid into benzoic acid and glycine. The protein is Hippurate hydrolase of Campylobacter jejuni subsp. jejuni serotype O:2 (strain ATCC 700819 / NCTC 11168).